An 858-amino-acid chain; its full sequence is Phospholipase D gamma 1 (858 aa).

The 137-residue stretch at 27-163 folds into the C2 domain; that stretch reads PFATSSGSLR…CSGNRIEGLF (137 aa). Position 225 (D225) interacts with Ca(2+). The PLD phosphodiesterase 1 domain occupies 364–399; it reads TIYTHHQKTVIVDAEAAQNRRKIVAFVGGLDLCNGR. Catalysis depends on residues H369, K371, and D376. H369 contributes to the a 1,2-diacyl-sn-glycero-3-phosphate binding site. Positions 405 and 437 each coordinate Ca(2+). Residue Q565 participates in a 1,2-diacyl-sn-glycero-3-phosphate binding. S680 carries the phosphoserine modification. Positions 704–731 constitute a PLD phosphodiesterase 2 domain; sequence FMIYVHSKGMVVDDEFVLIGSANINQRS. Active-site residues include H709, K711, and D716. Residue H709 coordinates a 1,2-diacyl-sn-glycero-3-phosphate. Residue E772 participates in Ca(2+) binding.

Belongs to the phospholipase D family. C2-PLD subfamily. The cofactor is Ca(2+). In terms of tissue distribution, highly expressed in roots and flowers, moderately in stems, leaves and seedlings and low in siliques. Not detected in seeds.

The protein localises to the cytoplasm. It is found in the membrane. The enzyme catalyses a 1,2-diacyl-sn-glycero-3-phosphocholine + H2O = a 1,2-diacyl-sn-glycero-3-phosphate + choline + H(+). Its activity is regulated as follows. Inhibited by neomycin. Up-regulated by PIP2 binding. Hydrolyzes glycerol-phospholipids at the terminal phosphodiesteric bond to generate phosphatidic acids (PA). Plays an important role in various cellular processes, including phytohormone action, vesicular trafficking, secretion, cytoskeletal arrangement, meiosis, tumor promotion, pathogenesis, membrane deterioration and senescence. Can use phosphatidylserine (PS) and phosphatidylethanolamine (PE) as substrates only in the presence of PIP2. Can use phosphatidylcholine (PC), phosphatidylglycerol (PG) or N-acylphosphatidylethanolamine (NAPE) as substrates in the presence of PE and PIP2. Involved in membrane lipid modulation under aluminum (Al) stress and negatively modulate plant tolerance to Al. The polypeptide is Phospholipase D gamma 1 (Arabidopsis thaliana (Mouse-ear cress)).